The chain runs to 223 residues: Imidazoleglycerol-phosphate dehydratase (223 aa).

This sequence belongs to the imidazoleglycerol-phosphate dehydratase family.

The enzyme catalyses D-erythro-1-(imidazol-4-yl)glycerol 3-phosphate = 3-(imidazol-4-yl)-2-oxopropyl phosphate + H2O. The protein operates within amino-acid biosynthesis; L-histidine biosynthesis; L-histidine from 5-phospho-alpha-D-ribose 1-diphosphate: step 6/9. The polypeptide is Imidazoleglycerol-phosphate dehydratase (HIS3) (Torulaspora delbrueckii (Yeast)).